The sequence spans 1393 residues: RNA polymerase II-associated protein 1 (1393 aa).

3 disordered regions span residues 34–53 (KKGNRGGGDANSDRPPLQDH), 61–94 (NLPDLPPALVPSPPKRARPSPGHCLPEDEDPEER), and 266–295 (SHTQEQTGETASEEQRPGGPSANVTKEEPL). Positions 64–74 (DLPPALVPSPP) are enriched in pro residues. Residue Ser-72 is modified to Phosphoserine. Thr-321 is modified (phosphothreonine). The tract at residues 496–531 (PSQEDKEDEDEDEECPAGKAKRKSPEEESRPPPDLA) is disordered. A compositionally biased stretch (acidic residues) spans 500 to 510 (DKEDEDEDEEC). Over residues 518–531 (KSPEEESRPPPDLA) the composition is skewed to basic and acidic residues. Ser-1121 bears the Phosphoserine mark.

It belongs to the RPAP1 family. In terms of assembly, part of an RNA polymerase II complex that contains POLR2A, POLR2B, POLR2C, POLR2D, POLR2E, POLR2F, POLR2G, POLR2H, POLR2I, POLR2J, POLR2K, POLR2L, RPAP1, FCP1 plus the general transcription factors TFIIB and TFIIF.

The protein localises to the nucleus. Its function is as follows. Forms an interface between the RNA polymerase II enzyme and chaperone/scaffolding protein, suggesting that it is required to connect RNA polymerase II to regulators of protein complex formation. Required for interaction of the RNA polymerase II complex with acetylated histone H3. The sequence is that of RNA polymerase II-associated protein 1 (RPAP1) from Homo sapiens (Human).